A 704-amino-acid polypeptide reads, in one-letter code: DNA ligase (704 aa).

Residues 44–48, 93–94, and Glu125 contribute to the NAD(+) site; these read DYEYD and SI. The N6-AMP-lysine intermediate role is filled by Lys127. NAD(+) is bound by residues Arg148, Glu184, Lys300, and Lys324. Zn(2+) contacts are provided by Cys418, Cys421, Cys436, and Cys442. One can recognise a BRCT domain in the interval 625–704; sequence IISSNISGKI…DEWEHLINEK (80 aa).

This sequence belongs to the NAD-dependent DNA ligase family. LigA subfamily. The cofactor is Mg(2+). Requires Mn(2+) as cofactor.

The catalysed reaction is NAD(+) + (deoxyribonucleotide)n-3'-hydroxyl + 5'-phospho-(deoxyribonucleotide)m = (deoxyribonucleotide)n+m + AMP + beta-nicotinamide D-nucleotide.. In terms of biological role, DNA ligase that catalyzes the formation of phosphodiester linkages between 5'-phosphoryl and 3'-hydroxyl groups in double-stranded DNA using NAD as a coenzyme and as the energy source for the reaction. It is essential for DNA replication and repair of damaged DNA. This is DNA ligase from Pelobacter propionicus (strain DSM 2379 / NBRC 103807 / OttBd1).